Reading from the N-terminus, the 883-residue chain is MDSGVKLEHMNCFQLSYQYSWTTRKKRTLKPFMSKGSSPSSSSDSRKRKLSRAEDSDDSAVKRNAKRRRKICKVEEYYEDDDCILSDWVQRNTAKRIDKRNEEVEVMVKIESGDDCTIGKWFSDVSSKRKDKRQVEVDEDEEWEEEVTLCSKIKATSSRSRTHSLSANSPENVTDVISPCRSRSPASNVSDSIQKNDCTSSRKQSGPICHQCLKGERITLLICSECEKTMFCLQCIRKWYPNLSEDDVVEKCPLCRQNCNCSKCLHLNGLIETSKRELAKSERRHHLQYLITLMLPFLNKLSIFQKLEIEFEATVQGKLPSEVEITAAISYTDERVYCDHCATSIVDLHRSCPKCSYELCLKCCQEIREGSLSERPEMKFHYVDRGHRYMHGLDAAEPSLSSTFEDEEANPSDAKWSLGENGSITCAPEKLGGCGERMLELRRILPLTWMSDLEHKAETFLSSYNISPRMLNCRCSSLETELTRKSASRTTSSDNYLFCPESLGVLKEEELLHFQEHWAKGEPVIVRNALDNTPGLSWEPMVMWRALCENVNSTSSSEMSQVKAIDCLANCEVEINTRQFFEGYSKGRTYENFWPEMLKLKDWPPSDKFEDLLPRHCDEFISALPFQEYSDPRTGILNIATKLPEGFIKPDLGPKTYIAYGIPDELGRGDSVTKLHCDMSDAVNILTHTAEVTLSQEQISSVKALKQKHKLQNKVDKQSTEDCNEKEEEEEEELNMPEISSNENEETGSALWDIFRREDVPKLEEYLRKHCKEFRHTYCSPVTKVYHPIHDQSCYLTLEHKRKLKAEYGIEPWTFVQKLGEAVFIPAGCPHQVRNLKSCTKVAVDFVSPENIHECLRLTEEFRQLPKNHKAREDKLEASLLSL.

2 disordered regions span residues 30 to 62 (KPFM…SAVK) and 161 to 204 (RTHS…SRKQ). A compositionally biased stretch (low complexity) spans 34-43 (SKGSSPSSSS). Composition is skewed to polar residues over residues 161–172 (RTHSLSANSPEN) and 184–204 (SPAS…SRKQ). Positions 209, 212, 223, 226, 232, 235, 252, 255, 338, 341, 363, and 381 each coordinate Zn(2+). The segment at 209–256 (CHQCLKGERITLLICSECEKTMFCLQCIRKWYPNLSEDDVVEKCPLCR) adopts an RING-type; degenerate zinc-finger fold. The B box-type; atypical zinc finger occupies 333–392 (DERVYCDHCATSIVDLHRSCPKCSYELCLKCCQEIREGSLSERPEMKFHYVDRGHRYMHG). The JmjC domain maps to 632 to 863 (PRTGILNIAT…ECLRLTEEFR (232 aa)). His676 and Asp678 together coordinate Fe cation. Residues 713-743 (NKVDKQSTEDCNEKEEEEEEELNMPEISSNE) are disordered. Over residues 722 to 735 (DCNEKEEEEEEELN) the composition is skewed to acidic residues. Positions 755–762 (FRREDVPK) match the Nuclear localization signal motif. Fe cation is bound at residue His831.

It belongs to the JARID1 histone demethylase family. Fe(2+) is required as a cofactor. As to expression, expressed in inflorescences, roots, siliques, leaves and stems.

It localises to the nucleus. Functionally, may function as histone H3 lysine demethylase and be involved in regulation of gene expression. In Arabidopsis thaliana (Mouse-ear cress), this protein is Lysine-specific demethylase JMJ29.